Here is a 528-residue protein sequence, read N- to C-terminus: Tyrosine--tRNA ligase, cytoplasmic (528 aa).

Met-1 carries the post-translational modification N-acetylmethionine. Gly-2 is modified (N-acetylglycine; in Tyrosine--tRNA ligase, cytoplasmic, N-terminally processed). Tyr-39 provides a ligand contact to L-tyrosine. Residue Tyr-39 coordinates trans-resveratrol. The short motif at 44–52 is the 'HIGH' region element; it reads TTGKPHVAY. Positions 166, 170, 173, and 188 each coordinate L-tyrosine. The trans-resveratrol site is built by Gln-170 and Asp-173. An N6-acetyllysine modification is found at Lys-197. Position 205 is a phosphoserine (Ser-205). Residue Lys-206 is modified to N6-acetyllysine. The 'KMSKS' region signature appears at 222-226; the sequence is KMSSS. The Nuclear localization signal signature appears at 242–247; it reads KKKLKK. The interval 339-363 is disordered; it reads AAYPDPSKQKPPAKGPAKNSEPEEV. The 105-residue stretch at 364–468 folds into the tRNA-binding domain; the sequence is IPSRLDIRVG…AGSAPGERVF (105 aa). Ser-386 carries the post-translational modification Phosphoserine. An N6-acetyllysine mark is found at Lys-474, Lys-482, and Lys-490.

This sequence belongs to the class-I aminoacyl-tRNA synthetase family. In terms of assembly, homodimer. Interacts (when binding to resveratrol) with PARP1; interaction stimulates the poly-ADP-ribosyltransferase activity of PARP1.

The protein localises to the cytoplasm. It is found in the nucleus. The enzyme catalyses tRNA(Tyr) + L-tyrosine + ATP = L-tyrosyl-tRNA(Tyr) + AMP + diphosphate + H(+). Resveratrol strongly inhibits the tyrosine--tRNA ligase activity. Its function is as follows. Tyrosine--tRNA ligase that catalyzes the attachment of tyrosine to tRNA(Tyr) in a two-step reaction: tyrosine is first activated by ATP to form Tyr-AMP and then transferred to the acceptor end of tRNA(Tyr). Also acts as a positive regulator of poly-ADP-ribosylation in the nucleus, independently of its tyrosine--tRNA ligase activity. Activity is switched upon resveratrol-binding: resveratrol strongly inhibits the tyrosine--tRNA ligase activity and promotes relocalization to the nucleus, where YARS1 specifically stimulates the poly-ADP-ribosyltransferase activity of PARP1. The chain is Tyrosine--tRNA ligase, cytoplasmic (Yars1) from Mus musculus (Mouse).